Consider the following 177-residue polypeptide: Outer envelope pore protein 21, chloroplastic (177 aa).

The Cytoplasmic segment spans residues 1–21; the sequence is METSLRYGGDSKALKIHAKEK. The beta stranded transmembrane segment at 22–31 threads the bilayer; sequence LRIDTNTFFQ. The Chloroplast intermembrane portion of the chain corresponds to 32 to 55; it reads VRGGLDTKTGQPSSGSALIRHFYP. A beta stranded transmembrane segment spans residues 56 to 65; it reads NFSATLGVGV. The Cytoplasmic segment spans residues 66 to 81; it reads RYDKQDSVGVRYAKND. Residues 82–91 traverse the membrane as a beta stranded segment; it reads KLRYTVLAKK. The Chloroplast intermembrane segment spans residues 92–97; it reads TFPVTN. A beta stranded membrane pass occupies residues 98–107; sequence DGLVNFKIKG. Residues 108-120 are Cytoplasmic-facing; it reads GCDVDQDFKEWKS. The chain crosses the membrane as a beta stranded span at residues 121-130; that stretch reads RGGAEFSWNV. The Chloroplast intermembrane segment spans residues 131-137; that stretch reads FNFQKDQ. A beta stranded transmembrane segment spans residues 138–147; that stretch reads DVRLRIGYEA. Residues 148 to 152 are Cytoplasmic-facing; that stretch reads FEQVP. Residues 153 to 162 traverse the membrane as a beta stranded segment; the sequence is YLQIRENNWT. Over 163-168 the chain is Chloroplast intermembrane; the sequence is FNADYK. A beta stranded transmembrane segment spans residues 169-177; that stretch reads GRWNVRYDL.

The protein belongs to the plastid outer envelope porin OEP21 (TC 1.B.29) family. In terms of tissue distribution, present in roots, shoots and leaves.

The protein resides in the plastid. It localises to the etioplast membrane. Its subcellular location is the chloroplast outer membrane. Voltage-dependent rectifying anion channel that facilitates the translocation between chloroplast and cytoplasm of phosphorylated carbohydrates such as triosephosphate, 3-phosphoglycerate and inorganic phosphate (Pi) depending of ATP to triosephosphate ratio in the plastidial intermembrane space; in high triosephosphate/ATP conditions (e.g. photosynthesis), export of triosphosphate from chloroplast (outward rectifying channels), but in high ATP/triosephosphate conditions (e.g. dark phase), import of phosphosolutes (inward rectifying channels). This Pisum sativum (Garden pea) protein is Outer envelope pore protein 21, chloroplastic (OEP21).